A 159-amino-acid polypeptide reads, in one-letter code: Cyclic pyranopterin monophosphate synthase (159 aa).

Substrate contacts are provided by residues 75 to 77 and 113 to 114; these read LCH and ME. Asp128 is a catalytic residue.

It belongs to the MoaC family. As to quaternary structure, homohexamer; trimer of dimers.

The enzyme catalyses (8S)-3',8-cyclo-7,8-dihydroguanosine 5'-triphosphate = cyclic pyranopterin phosphate + diphosphate. The protein operates within cofactor biosynthesis; molybdopterin biosynthesis. In terms of biological role, catalyzes the conversion of (8S)-3',8-cyclo-7,8-dihydroguanosine 5'-triphosphate to cyclic pyranopterin monophosphate (cPMP). This is Cyclic pyranopterin monophosphate synthase from Vibrio atlanticus (strain LGP32) (Vibrio splendidus (strain Mel32)).